The primary structure comprises 114 residues: Type 4 adapter protein IcmS (114 aa).

The T4BSS is a complex nanomachine composed of several subcomplexes. This subunit is part of the Type IV Coupling Complex (T4CC), a subcomplex composed of the DotLMNYZ core and the IcmSW-LvgA adapter subunits, linked by the C-terminal tail of DotL. Interacts with IcmW. IcmS and IcmW form a stable complex. Interacts directly with the type 4 coupling protein DotL. Interacts with LvgA. Interacts with effector proteins.

The protein localises to the cytoplasm. With respect to regulation, interaction with DotL is critical for the export of IcmSW-dependent substrates. Functionally, component of the Dot/Icm type IVB secretion system (T4BSS), which is used to inject bacterial effector proteins into eukaryotic host cells. Part of a subcomplex which recruits effector proteins and delivers them to the core transmembrane subcomplex. The IcmS/IcmW protein complex plays an important role in protein translocation by interacting with multiple Dot/Icm effector proteins to facilitate their translocation into host cells. Interaction promotes conformational changes in the effector protein, which may facilitate display of a C-terminal translocation signal. May maintain the substrates in a translocation competent form. Required for intracellular growth in host cells, replicative phagosome formation and phagosome trafficking. IcmS is required for IcmW stability. The protein is Type 4 adapter protein IcmS of Legionella pneumophila subsp. pneumophila (strain Philadelphia 1 / ATCC 33152 / DSM 7513).